A 427-amino-acid chain; its full sequence is Glutamate-1-semialdehyde 2,1-aminomutase (427 aa).

N6-(pyridoxal phosphate)lysine is present on K265.

This sequence belongs to the class-III pyridoxal-phosphate-dependent aminotransferase family. HemL subfamily. As to quaternary structure, homodimer. Pyridoxal 5'-phosphate serves as cofactor.

The protein resides in the cytoplasm. The enzyme catalyses (S)-4-amino-5-oxopentanoate = 5-aminolevulinate. The protein operates within porphyrin-containing compound metabolism; protoporphyrin-IX biosynthesis; 5-aminolevulinate from L-glutamyl-tRNA(Glu): step 2/2. The sequence is that of Glutamate-1-semialdehyde 2,1-aminomutase from Colwellia psychrerythraea (strain 34H / ATCC BAA-681) (Vibrio psychroerythus).